A 551-amino-acid chain; its full sequence is Bestrophin-1 (551 aa).

Residues 1–31 (MTITYTNKVANARLGSFSSLLLCWRGSIYKL) are Cytoplasmic-facing. Position 10 (Ala-10) interacts with Ca(2+). Residues 32-51 (LYGEFLVFIFLYYSIRGLYR) traverse the membrane as a helical segment. Residues 52–60 (MVLSSDQQL) are Extracellular-facing. The helical transmembrane segment at 61–82 (LFEKLALYCDSYIQLIPISFVL) threads the bilayer. The Cytoplasmic portion of the chain corresponds to 83–237 (GFYVTLVVSR…DWISIPLVYT (155 aa)). The chain crosses the membrane as a helical span at residues 238-255 (QVVTVAVYSFFLACLIGR). At 256-274 (QFLNPNKDYPGHEMDLVVP) the chain is on the extracellular side. Residues 275–288 (VFTILQFLFYMGWL) traverse the membrane as a helical segment. At 289 to 551 (KVAEQLINPF…EAGTKPVLYE (263 aa)) the chain is on the cytoplasmic side. Gln-293, Asn-296, Asp-301, and Asp-304 together coordinate Ca(2+). Residues 346–379 (PYTAASARSRRHSFMGSTFNISLKKEDLELWSKE) are auto-inhibitory segment. Residues 459–489 (SHCGPQAPSSHPTEQSAPSSSDTGDGPSTDY) are disordered. Residues 465-475 (APSSHPTEQSA) show a composition bias toward polar residues. The segment covering 476-488 (PSSSDTGDGPSTD) has biased composition (low complexity).

The protein belongs to the anion channel-forming bestrophin (TC 1.A.46) family. Calcium-sensitive chloride channel subfamily. In terms of assembly, interacts with YWHAG; this interaction promotes the ligand-gated L-glutamate channel activity leading to the positive regulation of NMDA glutamate receptor activity through the L-glutamate secretion.

It is found in the cell membrane. Its subcellular location is the basolateral cell membrane. The enzyme catalyses 4-aminobutanoate(in) = 4-aminobutanoate(out). It carries out the reaction L-glutamate(out) = L-glutamate(in). It catalyses the reaction chloride(in) = chloride(out). The catalysed reaction is hydrogencarbonate(in) = hydrogencarbonate(out). The enzyme catalyses D-serine(in) = D-serine(out). With respect to regulation, inactivated by sulfhydryl-reactive agents. Functionally, ligand-gated anion channel that allows the movement of anions across cell membranes when activated by calcium (Ca2+). Allows the movement of chloride and hydrogencarbonate. Found in a partially open conformation leading to significantly smaller chloride movement. Upon F2R/PAR-1 activation, the sequestered calcium is released into the cytosol of astrocytes, leading to the (Ca2+)-dependent release of L-glutamate into the synaptic cleft that targets the neuronal postsynaptic GRIN2A/NMDAR receptor resulting in the synaptic plasticity regulation. Upon activation of the norepinephrine-alpha-1 adrenergic receptor signaling pathway, transports as well D-serine than L-glutamate in a (Ca2+)-dependent manner, leading to activation of adjacent NMDAR receptors and therefore regulates the heterosynaptic long-term depression and metaplasticity during initial memory acquisition. Releases the 4-aminobutanoate neurotransmitter in a (Ca2+)-dependent manner, and participates in its tonic release from cerebellar glial cells. This Mus musculus (Mouse) protein is Bestrophin-1.